We begin with the raw amino-acid sequence, 891 residues long: Microtubule-associated protein 10 (891 aa).

Disordered stretches follow at residues 325-355, 401-457, 504-679, and 702-844; these read AAVQ…PPQI, EDKG…VTKG, SWKG…KSSC, and TTEN…SNLS. Positions 407–417 are enriched in low complexity; the sequence is PSTKSTSPSES. Composition is skewed to polar residues over residues 509-520 and 527-544; these read VSSSAAESQMSP and PTDS…SQLP. 2 stretches are compositionally biased toward basic and acidic residues: residues 577 to 592 and 645 to 658; these read STTK…KQEM and TVDK…DGRQ. Polar residues-rich tracts occupy residues 665 to 679, 702 to 718, 726 to 749, 776 to 790, and 826 to 844; these read ADTS…KSSC, TTEN…SSTG, SRAS…SSVL, EASS…SQWT, and KSQS…SNLS.

In terms of assembly, interacts (via middle region) with microtubules.

The protein localises to the cytoplasm. It is found in the cytoskeleton. Its subcellular location is the spindle pole. The protein resides in the microtubule organizing center. It localises to the centrosome. The protein localises to the midbody. Its function is as follows. Microtubule-associated protein (MAP) that plays a role in the regulation of cell division; promotes microtubule stability and participates in the organization of the spindle midzone and normal progress of cytokinesis. The polypeptide is Microtubule-associated protein 10 (Map10) (Mus musculus (Mouse)).